The primary structure comprises 235 residues: 2,3,4,5-tetrahydropyridine-2,6-dicarboxylate N-acetyltransferase (235 aa).

Belongs to the transferase hexapeptide repeat family. DapH subfamily.

It catalyses the reaction (S)-2,3,4,5-tetrahydrodipicolinate + acetyl-CoA + H2O = L-2-acetamido-6-oxoheptanedioate + CoA. Its pathway is amino-acid biosynthesis; L-lysine biosynthesis via DAP pathway; LL-2,6-diaminopimelate from (S)-tetrahydrodipicolinate (acetylase route): step 1/3. In terms of biological role, catalyzes the transfer of an acetyl group from acetyl-CoA to tetrahydrodipicolinate. This is 2,3,4,5-tetrahydropyridine-2,6-dicarboxylate N-acetyltransferase from Anoxybacillus flavithermus (strain DSM 21510 / WK1).